We begin with the raw amino-acid sequence, 586 residues long: Probable riboflavin import ATP-binding protein RfuB (586 aa).

2 consecutive ABC transporter domains span residues 46 to 299 and 343 to 586; these read RAVD…NECI and LRVE…DSHT. Position 89–96 (89–96) interacts with ATP; it reads GKNGAGKS.

It belongs to the ABC transporter superfamily. As to quaternary structure, the complex is probably composed of two ATP-binding proteins (RfuB), two transmembrane proteins (RfuC and RfuD) and a solute-binding protein (RfuA).

It is found in the cell inner membrane. Probably part of the ABC transporter complex RfuABCD involved in riboflavin import. Probably responsible for energy coupling to the transport system. The polypeptide is Probable riboflavin import ATP-binding protein RfuB (Treponema pallidum (strain Nichols)).